Consider the following 496-residue polypeptide: Neuronal acetylcholine receptor subunit beta-4 (496 aa).

An N-terminal signal peptide occupies residues 1-19 (MRSALPLVLFSLVALCGRG). The Extracellular portion of the chain corresponds to 20–236 (DCRVANAEEK…IIKRKPLFYT (217 aa)). Residues Asn-36, Asn-93, Asn-138, and Asn-166 are each glycosylated (N-linked (GlcNAc...) asparagine). A disulfide bridge connects residues Cys-153 and Cys-167. Residues 237–257 (INLIIPCVLITSLAILVFYLP) traverse the membrane as a helical segment. Residues 258 to 265 (SDCGEKMT) are Cytoplasmic-facing. Na(+) is bound at residue Glu-262. A helical transmembrane segment spans residues 266–286 (LCISVLLALTVFLLLISKIVP). Residues 287–298 (PTSLNVPLIGKY) lie on the Extracellular side of the membrane. A helical transmembrane segment spans residues 299–319 (LMFTMVLVTFSIVTSVCVLNV). Residues 320 to 464 (HHRSPSTHTM…WKYVAMVVDR (145 aa)) lie on the Cytoplasmic side of the membrane. Residues 465–485 (LFLWVFVVVCVLGTVGLFLPP) traverse the membrane as a helical segment. The Extracellular segment spans residues 486 to 496 (LFQTHTPSEEP).

It belongs to the ligand-gated ion channel (TC 1.A.9) family. Acetylcholine receptor (TC 1.A.9.1) subfamily. Beta-4/CHRNB4 sub-subfamily. In terms of assembly, neuronal AChR is composed of two different types of subunits: alpha and beta. CHRNB4/Beta-4 subunit can be combined to CHRNA2/alpha-2, CHRNA3/alpha-3 or CHRNA4/alpha-4, CHRNA5/alpha-5 and CHRNB3/beta-3 to give rise to functional receptors. Forms stoichiometries such as (CHRNA3)2:(CHRNB4)3 or (CHRNA3:CHRNB4)2:CHRNB3. Interacts with RIC3; which is required for proper folding and assembly. Interacts with LYPD6.

It is found in the synaptic cell membrane. The protein localises to the cell membrane. It catalyses the reaction Ca(2+)(in) = Ca(2+)(out). The enzyme catalyses K(+)(in) = K(+)(out). It carries out the reaction Na(+)(in) = Na(+)(out). In terms of biological role, component of neuronal acetylcholine receptors (nAChRs) that function as pentameric, ligand-gated cation channels with high calcium permeability among other activities. nAChRs are excitatory neurotrasnmitter receptors formed by a collection of nAChR subunits known to mediate synaptic transmission in the nervous system and the neuromuscular junction. Each nAchR subunit confers differential attributes to channel properties, including activation, deactivation and desensitization kinetics, pH sensitivity, cation permeability, and binding to allosteric modulators. CHRNB4 forms heteropentameric neuronal acetylcholine receptors with CHRNA2, CHRNA3 and CHRNA4, as well as CHRNA5 and CHRNB3 as accesory subunits. CHRNA3:CHRNB4 being predominant in neurons of the autonomic ganglia, it is known as ganglionic nicotinic receptor. CHRNA3:CHRNB4 or CHRNA3:CHRNA5:CHRNB4 play also an important role in the habenulo-interpeduncular tract, modulating the mesolimbic dopamine system and affecting reward circuits and addiction. Hypothalamic CHRNA3:CHRNB4 nAChR activation by nicotine leads to activation of POMC neurons and a decrease in food intake. The polypeptide is Neuronal acetylcholine receptor subunit beta-4 (CHRNB4) (Bos taurus (Bovine)).